The sequence spans 207 residues: LexA repressor (207 aa).

The segment at residues V28–S48 is a DNA-binding region (H-T-H motif). Catalysis depends on for autocatalytic cleavage activity residues S129 and K167.

This sequence belongs to the peptidase S24 family. Homodimer.

It catalyses the reaction Hydrolysis of Ala-|-Gly bond in repressor LexA.. Functionally, represses a number of genes involved in the response to DNA damage (SOS response), including recA and lexA. In the presence of single-stranded DNA, RecA interacts with LexA causing an autocatalytic cleavage which disrupts the DNA-binding part of LexA, leading to derepression of the SOS regulon and eventually DNA repair. The polypeptide is LexA repressor (Halalkalibacterium halodurans (strain ATCC BAA-125 / DSM 18197 / FERM 7344 / JCM 9153 / C-125) (Bacillus halodurans)).